The primary structure comprises 84 residues: Small ribosomal subunit protein uS17 (84 aa).

This sequence belongs to the universal ribosomal protein uS17 family. In terms of assembly, part of the 30S ribosomal subunit.

Functionally, one of the primary rRNA binding proteins, it binds specifically to the 5'-end of 16S ribosomal RNA. This is Small ribosomal subunit protein uS17 from Enterobacter sp. (strain 638).